The following is a 375-amino-acid chain: Chaperone protein DnaJ 1 (375 aa).

The J domain maps to 4–68; the sequence is DYYAILGVER…EKRRIVDMGG (65 aa). The CR-type zinc-finger motif lies at 127–209; it reads GTKKPITIDT…CGGDGRVRTQ (83 aa). 8 residues coordinate Zn(2+): Cys-140, Cys-143, Cys-157, Cys-160, Cys-183, Cys-186, Cys-197, and Cys-200. CXXCXGXG motif repeat units follow at residues 140–147, 157–164, 183–190, and 197–204; these read CDRCEGTG, CSTCNGSG, CPTCRGTG, and CDKCGGDG.

Belongs to the DnaJ family. As to quaternary structure, homodimer. The cofactor is Zn(2+).

Its subcellular location is the cytoplasm. Functionally, participates actively in the response to hyperosmotic and heat shock by preventing the aggregation of stress-denatured proteins and by disaggregating proteins, also in an autonomous, DnaK-independent fashion. Unfolded proteins bind initially to DnaJ; upon interaction with the DnaJ-bound protein, DnaK hydrolyzes its bound ATP, resulting in the formation of a stable complex. GrpE releases ADP from DnaK; ATP binding to DnaK triggers the release of the substrate protein, thus completing the reaction cycle. Several rounds of ATP-dependent interactions between DnaJ, DnaK and GrpE are required for fully efficient folding. Also involved, together with DnaK and GrpE, in the DNA replication of plasmids through activation of initiation proteins. The polypeptide is Chaperone protein DnaJ 1 (Corynebacterium diphtheriae (strain ATCC 700971 / NCTC 13129 / Biotype gravis)).